A 452-amino-acid chain; its full sequence is Glycoprotein endo-alpha-1,2-mannosidase-like protein (452 aa).

Over 1–8 the chain is Cytoplasmic; sequence MARRRRRA. The helical; Signal-anchor for type II membrane protein transmembrane segment at 9-29 threads the bilayer; the sequence is CIALFLVLLFAFGTLMGLRTL. The Lumenal portion of the chain corresponds to 30-452; it reads KAPDGLPALG…FIKEKEQWLM (423 aa). A disordered region spans residues 40–90; that stretch reads PGPELAPFERRPEGNPAPARAPAAPAAPPPPPPRTAAPRASLGPAEADPAP. Over residues 64 to 74 the composition is skewed to pro residues; that stretch reads PAAPPPPPPRT.

Belongs to the glycosyl hydrolase 99 family.

The protein resides in the golgi apparatus membrane. In Mus musculus (Mouse), this protein is Glycoprotein endo-alpha-1,2-mannosidase-like protein (Maneal).